We begin with the raw amino-acid sequence, 399 residues long: 4-hydroxyphenylpyruvate dioxygenase (399 aa).

VOC domains follow at residues 23 to 166 (GYDH…LIER) and 197 to 355 (RIDH…LFTK). Fe cation-binding residues include H200, H283, and E366.

Belongs to the 4HPPD family. Fe cation serves as cofactor.

It carries out the reaction 3-(4-hydroxyphenyl)pyruvate + O2 = homogentisate + CO2. The protein operates within amino-acid degradation; L-phenylalanine degradation; acetoacetate and fumarate from L-phenylalanine: step 3/6. This chain is 4-hydroxyphenylpyruvate dioxygenase (TCRP), found in Coccidioides posadasii (strain C735) (Valley fever fungus).